The sequence spans 346 residues: Putative [LysW]-L-2-aminoadipate/[LysW]-L-glutamate phosphate reductase (346 aa).

NADP(+) is bound at residue 12 to 15 (SGFT). Residue C147 is part of the active site. The disordered stretch occupies residues 178–198 (GSSEGGAGGGDASSHPERSGV). N310 is an NADP(+) binding site.

Belongs to the NAGSA dehydrogenase family. Type 1 subfamily. LysY sub-subfamily.

Its subcellular location is the cytoplasm. The enzyme catalyses [amino-group carrier protein]-C-terminal-N-(1-carboxy-5-oxopentan-1-yl)-L-glutamine + phosphate + NADP(+) = [amino-group carrier protein]-C-terminal-N-(1-carboxy-5-phosphooxy-5-oxopentan-1-yl)-L-glutamine + NADPH + H(+). It carries out the reaction [amino-group carrier protein]-C-terminal-gamma-(L-glutamyl-5-semialdehyde)-L-glutamate + phosphate + NADP(+) = [amino-group carrier protein]-C-terminal-gamma-(5-phospho-L-glutamyl)-L-glutamate + NADPH + H(+). It functions in the pathway amino-acid biosynthesis; L-lysine biosynthesis via AAA pathway; L-lysine from L-alpha-aminoadipate (Thermus route): step 3/5. It participates in amino-acid biosynthesis; L-arginine biosynthesis. In terms of biological role, involved in both the arginine and lysine biosynthetic pathways. This is Putative [LysW]-L-2-aminoadipate/[LysW]-L-glutamate phosphate reductase from Haloquadratum walsbyi (strain DSM 16790 / HBSQ001).